The chain runs to 227 residues: Ribonuclease 3 (227 aa).

The RNase III domain occupies 5–127 (LNALQLRLQH…LIGAVYLDAG (123 aa)). E40 provides a ligand contact to Mg(2+). D44 is a catalytic residue. D113 and E116 together coordinate Mg(2+). Residue E116 is part of the active site. A DRBM domain is found at 154–224 (DAKTALQEWL…ATAMLELLKA (71 aa)).

Belongs to the ribonuclease III family. In terms of assembly, homodimer. It depends on Mg(2+) as a cofactor.

It localises to the cytoplasm. It carries out the reaction Endonucleolytic cleavage to 5'-phosphomonoester.. Its function is as follows. Digests double-stranded RNA. Involved in the processing of primary rRNA transcript to yield the immediate precursors to the large and small rRNAs (23S and 16S). Processes some mRNAs, and tRNAs when they are encoded in the rRNA operon. Processes pre-crRNA and tracrRNA of type II CRISPR loci if present in the organism. This chain is Ribonuclease 3, found in Delftia acidovorans (strain DSM 14801 / SPH-1).